Here is a 582-residue protein sequence, read N- to C-terminus: Leucine-rich repeat transmembrane neuronal protein 3 (582 aa).

An N-terminal signal peptide occupies residues 1–30; sequence MGFNVIRLLRGSAVAVVLAPTVLLTMLSSA. The 31-residue stretch at 31–61 folds into the LRRNT domain; that stretch reads ERGCPKGCRCEGKMVYCESQKLQEIPSSISA. Residues 31–420 are Extracellular-facing; that stretch reads ERGCPKGCRC…VDTEHISFHK (390 aa). LRR repeat units follow at residues 63 to 83, 86 to 107, 110 to 131, 134 to 155, 158 to 179, 182 to 203, 206 to 226, 230 to 251, 254 to 275, and 279 to 300; these read CLGL…QFKG, QLTW…AFNG, RLKE…TFRP, NLRN…QFRG, KLLS…IFQD, NLEL…VFAG, RLKE…ALFP, SLQN…MSWT, SLQR…SVFQ, and NLQR…ILDS. Residue N126 is glycosylated (N-linked (GlcNAc...) asparagine). The region spanning 312–363 is the LRRCT domain; sequence NIWECSRNICSLVNWLRSFKGLRENTIICASPKELQGVNVIDAVKNYSICGK. N357 carries an N-linked (GlcNAc...) asparagine glycan. Residues 378-410 form a disordered region; that stretch reads KPTFKPKLPRPKHESKPPLPPTVGATEPSPETD. Residues 421–441 form a helical membrane-spanning segment; sequence IIAGSVALFLSVLVILLVMYV. Over 442–582 the chain is Cytoplasmic; that stretch reads SWKRYPASMK…RISDHKPQLA (141 aa).

Belongs to the LRRTM family. In terms of tissue distribution, expressed in neuronal tissues.

Its subcellular location is the cell membrane. It is found in the postsynaptic cell membrane. May play a role in the development and maintenance of the vertebrate nervous system. Exhibits a limited synaptogenic activity in vitro, restricted to excitatory presynaptic differentiation. This Mus musculus (Mouse) protein is Leucine-rich repeat transmembrane neuronal protein 3 (Lrrtm3).